The following is a 601-amino-acid chain: Sulfite reductase [NADPH] flavoprotein alpha-component (601 aa).

The Flavodoxin-like domain maps to Ile65–Leu203. Residues Ser71–Ala76, Ser118–Gly121, and Leu154–Cys163 each bind FMN. In terms of domain architecture, FAD-binding FR-type spans Lys236–Pro450. FAD is bound by residues Thr324, Ile358, Arg388–Ser391, Thr406–Gly408, and Gly421–Ser424. NADP(+)-binding positions include Ser521–Gln522, Lys527–Gln531, and Asp563. Tyr601 is an FAD binding site.

This sequence belongs to the NADPH-dependent sulphite reductase flavoprotein subunit CysJ family. It in the N-terminal section; belongs to the flavodoxin family. The protein in the C-terminal section; belongs to the flavoprotein pyridine nucleotide cytochrome reductase family. Alpha(8)-beta(8). The alpha component is a flavoprotein, the beta component is a hemoprotein. FAD serves as cofactor. It depends on FMN as a cofactor.

It carries out the reaction hydrogen sulfide + 3 NADP(+) + 3 H2O = sulfite + 3 NADPH + 4 H(+). The protein operates within sulfur metabolism; hydrogen sulfide biosynthesis; hydrogen sulfide from sulfite (NADPH route): step 1/1. Its function is as follows. Component of the sulfite reductase complex that catalyzes the 6-electron reduction of sulfite to sulfide. This is one of several activities required for the biosynthesis of L-cysteine from sulfate. The flavoprotein component catalyzes the electron flow from NADPH -&gt; FAD -&gt; FMN to the hemoprotein component. In Buchnera aphidicola subsp. Acyrthosiphon pisum (strain APS) (Acyrthosiphon pisum symbiotic bacterium), this protein is Sulfite reductase [NADPH] flavoprotein alpha-component.